Consider the following 185-residue polypeptide: Large ribosomal subunit protein uL22 (185 aa).

The segment at Val157–Asp185 is disordered. Residues Lys169 to Arg178 are compositionally biased toward basic residues.

The protein belongs to the universal ribosomal protein uL22 family.

The polypeptide is Large ribosomal subunit protein uL22 (RpL17) (Argas monolakensis (Mono lake bird tick)).